A 177-amino-acid chain; its full sequence is MLDAFSKVITSADGKAAYVGGADLQALKKFVSEGNKRMDSVNAIVSNASCIVSDSVSGMVCENPSLIAPNGGVYTNRKMAACLRDAEIILRYVSYSLLSGDSSVLEDRCLNGLKETYASLGVPAAGNARTISIMKATVIGFITNNSQQKKLSTPAGDCSALASEVGGYFDKVSSALA.

Tyrosine 18, lysine 28, asparagine 35, and aspartate 39 together coordinate (2R,3E)-phycoerythrobilin. The 15,16-dihydrobiliverdin site is built by cysteine 50, aspartate 54, and cysteine 61. 3 residues coordinate (2R,3E)-phycoerythrobilin: cysteine 82, arginine 84, and aspartate 85. Arginine 129 contributes to the 15,16-dihydrobiliverdin binding site. Position 144 (asparagine 144) interacts with (2R,3E)-phycoerythrobilin. 2 residues coordinate 15,16-dihydrobiliverdin: glutamine 148 and lysine 149. Positions 154, 156, and 158 each coordinate (2R,3E)-phycoerythrobilin.

This sequence belongs to the phycobiliprotein family. In terms of assembly, heterotetramer of 2 different alpha chains and 2 identical beta chains which form 2 alpha-beta heterodimers within the heterotetramer. The two alpha-beta heterodimers are rotated to an open configuration in contrast to the closed configuration found in other cryptophyte species due to the insertion of a single amino acid, 'Asp-65', in a conserved region of the alpha chain. In the open form, the central chromophores are not in physical contact but are separated by a water-filled channel. In terms of processing, contains three phycoerythrobilin chromophores and one 15,16-dihydrobiliverdin chromophore with binding of the phycoerythrobilin chromophores mediated by both the alpha and beta subunits.

The protein resides in the plastid. The protein localises to the chloroplast thylakoid membrane. Its function is as follows. Light-harvesting photosynthetic bile pigment-protein from the phycobiliprotein complex. The protein is Phycoerythrin beta subunit of Hemiselmis andersenii (Cryptophyte alga).